The chain runs to 408 residues: Dual-specificity RNA methyltransferase RlmN (408 aa).

The Proton acceptor role is filled by Glu122. A Radical SAM core domain is found at 128–369; sequence EEDRGTLCIS…NRAGYASPIR (242 aa). A disulfide bridge links Cys135 with Cys380. Positions 142, 146, and 149 each coordinate [4Fe-4S] cluster. Residues 206 to 207, Ser238, 260 to 262, and Asn337 contribute to the S-adenosyl-L-methionine site; these read GE and SLH. Cys380 functions as the S-methylcysteine intermediate in the catalytic mechanism.

The protein belongs to the radical SAM superfamily. RlmN family. [4Fe-4S] cluster serves as cofactor.

It localises to the cytoplasm. It carries out the reaction adenosine(2503) in 23S rRNA + 2 reduced [2Fe-2S]-[ferredoxin] + 2 S-adenosyl-L-methionine = 2-methyladenosine(2503) in 23S rRNA + 5'-deoxyadenosine + L-methionine + 2 oxidized [2Fe-2S]-[ferredoxin] + S-adenosyl-L-homocysteine. The enzyme catalyses adenosine(37) in tRNA + 2 reduced [2Fe-2S]-[ferredoxin] + 2 S-adenosyl-L-methionine = 2-methyladenosine(37) in tRNA + 5'-deoxyadenosine + L-methionine + 2 oxidized [2Fe-2S]-[ferredoxin] + S-adenosyl-L-homocysteine. Specifically methylates position 2 of adenine 2503 in 23S rRNA and position 2 of adenine 37 in tRNAs. m2A2503 modification seems to play a crucial role in the proofreading step occurring at the peptidyl transferase center and thus would serve to optimize ribosomal fidelity. This Chelativorans sp. (strain BNC1) protein is Dual-specificity RNA methyltransferase RlmN.